Reading from the N-terminus, the 77-residue chain is Large ribosomal subunit protein bL28 (77 aa).

The segment at 1-20 is disordered; the sequence is MSRVCQVTGKGPVTGNNISH.

The protein belongs to the bacterial ribosomal protein bL28 family.

The sequence is that of Large ribosomal subunit protein bL28 from Pseudomonas syringae pv. tomato (strain ATCC BAA-871 / DC3000).